The primary structure comprises 314 residues: R2-like ligand binding oxidase (314 aa).

Positions 68, 101, and 104 each coordinate Mn(2+). A cross-link (3-(O4'-tyrosyl)-valine (Val-Tyr)) is located at residues 71–162 (VTEDIQPFMS…AAQVRASVTY (92 aa)). E101 contacts Fe cation. Positions 167, 202, and 205 each coordinate Fe cation.

This sequence belongs to the ribonucleoside diphosphate reductase small chain family. R2-like ligand binding oxidase subfamily. Homodimer. Fe cation is required as a cofactor. It depends on Mn(2+) as a cofactor.

Functionally, probable oxidase that might be involved in lipid metabolism. This chain is R2-like ligand binding oxidase, found in Mycobacterium tuberculosis (strain ATCC 25177 / H37Ra).